Consider the following 60-residue polypeptide: MSDKTVKVQLVKSLIGTRETHRATVRGLGLRRLNSVSELQDTPAVRGMINKVSYLVKVIS.

The protein belongs to the universal ribosomal protein uL30 family. Part of the 50S ribosomal subunit.

The chain is Large ribosomal subunit protein uL30 from Paraburkholderia phytofirmans (strain DSM 17436 / LMG 22146 / PsJN) (Burkholderia phytofirmans).